Reading from the N-terminus, the 64-residue chain is MGMRMMFTMFLLVVLTTTVVSFNLDRESNHENRRTSNQITRGMWDECCDDPPCRQNNMEHCPAS.

Residues 1 to 21 form the signal peptide; it reads MGMRMMFTMFLLVVLTTTVVS. Residues 22–45 constitute a propeptide that is removed on maturation; it reads FNLDRESNHENRRTSNQITRGMWD. Cystine bridges form between C47-C53 and C48-C61. The lacks the Ser-Xaa-Pro motif that is crucial for potent interaction with nAChR stretch occupies residues 49 to 51; the sequence is DDP.

The protein belongs to the conotoxin A superfamily. In terms of tissue distribution, expressed by the venom duct.

It localises to the secreted. Its function is as follows. Alpha-conotoxins act on postsynaptic membranes, they bind to the nicotinic acetylcholine receptors (nAChR) and thus inhibit them. Has possibly a distinct nAChR binding mode from other alpha-conotoxins, due to a different three residue motif (lacks the Ser-Xaa-Pro motif). This chain is Alpha-conotoxin-like Lt1.3, found in Conus litteratus (Lettered cone).